Reading from the N-terminus, the 205-residue chain is Ribonuclease HII (205 aa).

One can recognise an RNase H type-2 domain in the interval 14-201; that stretch reads EIIAGVDEAG…KGNINHSAIL (188 aa). A divalent metal cation contacts are provided by Asp20, Glu21, and Asp111.

It belongs to the RNase HII family. Mn(2+) serves as cofactor. The cofactor is Mg(2+).

The protein localises to the cytoplasm. It carries out the reaction Endonucleolytic cleavage to 5'-phosphomonoester.. Functionally, endonuclease that specifically degrades the RNA of RNA-DNA hybrids. The polypeptide is Ribonuclease HII (Orientia tsutsugamushi (strain Ikeda) (Rickettsia tsutsugamushi)).